A 152-amino-acid polypeptide reads, in one-letter code: Large ribosomal subunit protein bL9 (152 aa).

The protein belongs to the bacterial ribosomal protein bL9 family.

Functionally, binds to the 23S rRNA. In Mycobacterium ulcerans (strain Agy99), this protein is Large ribosomal subunit protein bL9.